The sequence spans 206 residues: MTAKPVLNRAHFFTSVAQFRDLPPSRAEVAFAGRSNAGKSSAINLLTRKNRLAFTSKTPGRTQLINFFELTADTYLVDLPGYGYAKVPPEVKAKWEGLLSRYLQEREALAGMVLIMDARHPLTPLDRQMLEWFAPTGKPVHILLSKADKLSNSEKALTLRKVKQELADRETVSVQLFSSLSRVGAEEAAVRIEGWLAPEAAVHAPG.

One can recognise an EngB-type G domain in the interval 25 to 198; sequence SRAEVAFAGR…AVRIEGWLAP (174 aa). Mg(2+)-binding residues include Ser-40 and Thr-62.

Belongs to the TRAFAC class TrmE-Era-EngA-EngB-Septin-like GTPase superfamily. EngB GTPase family. It depends on Mg(2+) as a cofactor.

Necessary for normal cell division and for the maintenance of normal septation. The protein is Probable GTP-binding protein EngB of Thiobacillus denitrificans (strain ATCC 25259 / T1).